A 202-amino-acid polypeptide reads, in one-letter code: Protease (202 aa).

Residues His55, Asp72, and Cys122 contribute to the active site.

Belongs to the peptidase C5 family. In terms of assembly, interacts with protease cofactor pVI-C; this interaction is necessary for protease activation.

It localises to the virion. It is found in the host nucleus. It catalyses the reaction Cleaves proteins of the adenovirus and its host cell at two consensus sites: -Yaa-Xaa-Gly-Gly-|-Xaa- and -Yaa-Xaa-Gly-Xaa-|-Gly- (in which Yaa is Met, Ile or Leu, and Xaa is any amino acid).. Its activity is regulated as follows. Requires DNA and protease cofactor for maximal activation. Inside nascent virions, becomes partially activated by binding to the viral DNA, allowing it to cleave the cofactor that binds to the protease and fully activates it. Actin, like the viral protease cofactor, seems to act as a cofactor in the cleavage of cytokeratin 18 and of actin itself. Functionally, cleaves viral precursor proteins (pTP, pIIIa, pVI, pVII, pVIII, and pX) inside newly assembled particles giving rise to mature virions. Protease complexed to its cofactor slides along the viral DNA to specifically locate and cleave the viral precursors. Mature virions have a weakened organization compared to the unmature virions, thereby facilitating subsequent uncoating. Without maturation, the particle lacks infectivity and is unable to uncoat. Late in adenovirus infection, in the cytoplasm, may participate in the cytoskeleton destruction. Cleaves host cell cytoskeletal keratins K7 and K18. The protein is Protease of Bovine adenovirus 7 (BAdV-7).